Reading from the N-terminus, the 86-residue chain is Large ribosomal subunit protein bL31B (86 aa).

It belongs to the bacterial ribosomal protein bL31 family. Type B subfamily. In terms of assembly, part of the 50S ribosomal subunit.

This chain is Large ribosomal subunit protein bL31B, found in Salmonella paratyphi A (strain ATCC 9150 / SARB42).